The primary structure comprises 257 residues: MSWSAAQYVKFEDERTRPARDLLAQVPDLPAGPAFDLGCGPGNSTQLILERFPNNPLVGIDSDENMLEAARKRLLGLRFERADLIGWTPPQGAALFFANAVFQWLPKHIDLLERLVDALVPGGTLAVQMPDNLDEPSHLLMQETAEERAFAAAFSGRTIRRVPLPSPRTYVERLAPKVARVDVWHTTYYHPLASANAIVEWVKGTGLRPYLDALPANRRKDYLAAYAEKIRRAYPAMGDGRVLLRFPRLFIVAVKAA.

Belongs to the methyltransferase superfamily. Tam family.

It localises to the cytoplasm. The catalysed reaction is trans-aconitate + S-adenosyl-L-methionine = (E)-3-(methoxycarbonyl)pent-2-enedioate + S-adenosyl-L-homocysteine. Functionally, catalyzes the S-adenosylmethionine monomethyl esterification of trans-aconitate. This is Trans-aconitate 2-methyltransferase from Sinorhizobium fredii (strain NBRC 101917 / NGR234).